Reading from the N-terminus, the 242-residue chain is Protein HTATIP2 (242 aa).

Position 2 is an N-acetylalanine (Ala2). Residues 2-25 form a required for interaction with elongation factor EEF1A1 region; the sequence is ADKEALPKLREDFKMQNKSVFILG. NADPH-binding residues include Ser27, Gly28, Glu29, Thr30, Arg52, Arg53, Leu92, Gly93, Tyr143, Lys147, Leu170, and Arg178. Catalysis depends on Tyr143, which acts as the Proton acceptor. Lys147 is an active-site residue.

Monomer. Forms homodimers during oxidative stress. Interacts (via N-terminus) with elongation factor EEF1A1 (via middle-region); the interaction is direct and competes with EEF1A1 binding to guanyl-nucleotide exchange factor EEF1B2, thereby inhibiting GDP for GTP exchange and reactivation of EEF1A1. Interacts with nuclear transport receptors XPO4, IPO5/RANBP5, IPO7, IPO9 and KPNB1 as well as GCN1L1/GCN1 and LRPPRC probably through their HEAT repeats. Binds NCOA5/CIA.

The protein localises to the cytoplasm. Its function is as follows. Represses translation by preventing reactivation of elongation factor eEF1A. May also inhibit nuclear import by competing with nuclear import substrates for binding to a subset of nuclear transport receptors. Has additionally been proposed to act as a redox sensor involved in cellular oxidative stress surveillance. This is Protein HTATIP2 from Mus musculus (Mouse).